Here is a 127-residue protein sequence, read N- to C-terminus: Apolipoprotein C-IV (127 aa).

The first 27 residues, 1 to 27 (MSLLRNRLQDLPALCLCVLVLACIGAC), serve as a signal peptide directing secretion.

Belongs to the apolipoprotein C4 family.

It is found in the secreted. Functionally, may participate in lipoprotein metabolism. This chain is Apolipoprotein C-IV (APOC4), found in Papio hamadryas (Hamadryas baboon).